Consider the following 424-residue polypeptide: Tyrosine--tRNA ligase (424 aa).

Y37 serves as a coordination point for L-tyrosine. A 'HIGH' region motif is present at residues 42–51; the sequence is PTADSLHLGH. Residues Y175 and Q179 each coordinate L-tyrosine. The short motif at 235–239 is the 'KMSKS' region element; the sequence is KFGKT. Residue K238 coordinates ATP. The region spanning 357–414 is the S4 RNA-binding domain; that stretch reads ADLQQALVNAELVPSRGQARTMIGSNAVAINGEKQADPEYVFTDADRLFGRYTLLRRG.

Belongs to the class-I aminoacyl-tRNA synthetase family. TyrS type 1 subfamily. As to quaternary structure, homodimer.

It localises to the cytoplasm. The catalysed reaction is tRNA(Tyr) + L-tyrosine + ATP = L-tyrosyl-tRNA(Tyr) + AMP + diphosphate + H(+). Its function is as follows. Catalyzes the attachment of tyrosine to tRNA(Tyr) in a two-step reaction: tyrosine is first activated by ATP to form Tyr-AMP and then transferred to the acceptor end of tRNA(Tyr). In Yersinia pestis bv. Antiqua (strain Antiqua), this protein is Tyrosine--tRNA ligase.